The sequence spans 397 residues: Major outer membrane porin, serovar L3 (397 aa).

Positions Met1–Ala22 are cleaved as a signal peptide.

The protein belongs to the chlamydial porin (CP) (TC 1.B.2) family. In terms of assembly, part of a disulfide cross-linked outer membrane complex (COMC) composed of the major outer membrane porin (MOMP), the small cysteine-rich protein (OmcA) and the large cysteine-rich periplasmic protein (OmcB).

It is found in the cell outer membrane. In elementary bodies (EBs, the infectious stage, which is able to survive outside the host cell) provides the structural integrity of the outer envelope through disulfide cross-links with the small cysteine-rich protein and the large cysteine-rich periplasmic protein. It has been described in publications as the Sarkosyl-insoluble COMC (Chlamydia outer membrane complex), and serves as the functional equivalent of peptidoglycan. Its function is as follows. Permits diffusion of specific solutes through the outer membrane. The sequence is that of Major outer membrane porin, serovar L3 (ompA) from Chlamydia trachomatis.